A 347-amino-acid chain; its full sequence is Probable dual-specificity RNA methyltransferase RlmN (347 aa).

The active-site Proton acceptor is the Glu93. The region spanning 99–333 is the Radical SAM core domain; that stretch reads TEKRLTACLS…VSLRKSRGLD (235 aa). Residues Cys106 and Cys338 are joined by a disulfide bond. [4Fe-4S] cluster contacts are provided by Cys113, Cys117, and Cys120. S-adenosyl-L-methionine contacts are provided by residues 160 to 161, Ser190, 219 to 221, and Asn295; these read GE and SLH. Cys338 (S-methylcysteine intermediate) is an active-site residue.

Belongs to the radical SAM superfamily. RlmN family. [4Fe-4S] cluster serves as cofactor.

It is found in the cytoplasm. The catalysed reaction is adenosine(2503) in 23S rRNA + 2 reduced [2Fe-2S]-[ferredoxin] + 2 S-adenosyl-L-methionine = 2-methyladenosine(2503) in 23S rRNA + 5'-deoxyadenosine + L-methionine + 2 oxidized [2Fe-2S]-[ferredoxin] + S-adenosyl-L-homocysteine. It carries out the reaction adenosine(37) in tRNA + 2 reduced [2Fe-2S]-[ferredoxin] + 2 S-adenosyl-L-methionine = 2-methyladenosine(37) in tRNA + 5'-deoxyadenosine + L-methionine + 2 oxidized [2Fe-2S]-[ferredoxin] + S-adenosyl-L-homocysteine. In terms of biological role, specifically methylates position 2 of adenine 2503 in 23S rRNA and position 2 of adenine 37 in tRNAs. This chain is Probable dual-specificity RNA methyltransferase RlmN, found in Prochlorococcus marinus (strain MIT 9301).